The following is a 311-amino-acid chain: Putative protease MJ0651 (311 aa).

The active-site Nucleophile is the S128. K180 serves as the catalytic Proton donor/acceptor.

The protein belongs to the peptidase S49 family.

The polypeptide is Putative protease MJ0651 (Methanocaldococcus jannaschii (strain ATCC 43067 / DSM 2661 / JAL-1 / JCM 10045 / NBRC 100440) (Methanococcus jannaschii)).